The primary structure comprises 55 residues: Neurotoxin X-29S (55 aa).

An N-terminal signal peptide occupies residues 1–23; sequence MKIFFAVLVILVLFSMLIWTAYG. Intrachain disulfides connect cysteine 30–cysteine 45, cysteine 36–cysteine 50, and cysteine 39–cysteine 53.

In terms of tissue distribution, expressed by the venom gland.

It localises to the secreted. This is Neurotoxin X-29S from Olivierus martensii (Manchurian scorpion).